Here is an 866-residue protein sequence, read N- to C-terminus: Putative linoleate 9S-lipoxygenase 3 (866 aa).

Residues 33–161 (NDFGATVIDG…KYRYDRVFFA (129 aa)) enclose the PLAT domain. The 703-residue stretch at 164-866 (AYLPSQMPAA…AKGIPNSISI (703 aa)) folds into the Lipoxygenase domain. The disordered stretch occupies residues 206 to 250 (YNDLGSPDSGNPRPILGGSPDTPYPRRGRTGRKPTTTDPDSESRL). Residues H521, H526, H712, N716, and I866 each coordinate Fe cation.

This sequence belongs to the lipoxygenase family. The cofactor is Fe cation.

The catalysed reaction is (9Z,12Z)-octadecadienoate + O2 = (9S)-hydroperoxy-(10E,12Z)-octadecadienoate. It functions in the pathway lipid metabolism; oxylipin biosynthesis. Plant lipoxygenase may be involved in a number of diverse aspects of plant physiology including growth and development, pest resistance, and senescence or responses to wounding. Catalyzes the hydroperoxidation of lipids containing a cis,cis-1,4-pentadiene structure. The sequence is that of Putative linoleate 9S-lipoxygenase 3 from Oryza sativa subsp. japonica (Rice).